A 375-amino-acid chain; its full sequence is Succinyl-diaminopimelate desuccinylase (375 aa).

Histidine 66 contacts Zn(2+). Aspartate 68 is a catalytic residue. Aspartate 99 is a binding site for Zn(2+). The active-site Proton acceptor is the glutamate 133. 3 residues coordinate Zn(2+): glutamate 134, glutamate 162, and histidine 348.

This sequence belongs to the peptidase M20A family. DapE subfamily. Homodimer. The cofactor is Zn(2+). It depends on Co(2+) as a cofactor.

The enzyme catalyses N-succinyl-(2S,6S)-2,6-diaminopimelate + H2O = (2S,6S)-2,6-diaminopimelate + succinate. Its pathway is amino-acid biosynthesis; L-lysine biosynthesis via DAP pathway; LL-2,6-diaminopimelate from (S)-tetrahydrodipicolinate (succinylase route): step 3/3. Its function is as follows. Catalyzes the hydrolysis of N-succinyl-L,L-diaminopimelic acid (SDAP), forming succinate and LL-2,6-diaminopimelate (DAP), an intermediate involved in the bacterial biosynthesis of lysine and meso-diaminopimelic acid, an essential component of bacterial cell walls. The protein is Succinyl-diaminopimelate desuccinylase of Erwinia tasmaniensis (strain DSM 17950 / CFBP 7177 / CIP 109463 / NCPPB 4357 / Et1/99).